Consider the following 185-residue polypeptide: Erythropoietin (185 aa).

The first 25 residues, 1–25 (MLQKTGRGLLAFLLIVLEWTQPSLP), serve as a signal peptide directing secretion. Intrachain disulfides connect Cys-32–Cys-180 and Cys-54–Cys-58.

This sequence belongs to the EPO/TPO family. In terms of tissue distribution, expressed mainly in heart, liver and brain. Isoform 2 is brain specific.

It is found in the secreted. Functionally, erythropoietin is the principal hormone involved in the regulation of erythrocyte differentiation and the maintenance of a physiological level of circulating erythrocyte mass. The polypeptide is Erythropoietin (epo) (Takifugu rubripes (Japanese pufferfish)).